A 292-amino-acid polypeptide reads, in one-letter code: 4-diphosphocytidyl-2-C-methyl-D-erythritol kinase (292 aa).

Lys-20 is an active-site residue. Residue 103–113 coordinates ATP; it reads PMGGGIGGGSS. The active site involves Asp-145.

It belongs to the GHMP kinase family. IspE subfamily.

It catalyses the reaction 4-CDP-2-C-methyl-D-erythritol + ATP = 4-CDP-2-C-methyl-D-erythritol 2-phosphate + ADP + H(+). The protein operates within isoprenoid biosynthesis; isopentenyl diphosphate biosynthesis via DXP pathway; isopentenyl diphosphate from 1-deoxy-D-xylulose 5-phosphate: step 3/6. Functionally, catalyzes the phosphorylation of the position 2 hydroxy group of 4-diphosphocytidyl-2C-methyl-D-erythritol. The polypeptide is 4-diphosphocytidyl-2-C-methyl-D-erythritol kinase (Cupriavidus taiwanensis (strain DSM 17343 / BCRC 17206 / CCUG 44338 / CIP 107171 / LMG 19424 / R1) (Ralstonia taiwanensis (strain LMG 19424))).